The following is a 210-amino-acid chain: Large ribosomal subunit protein uL3 (210 aa).

The segment at 121–150 (GGIKRHGFHRGPMAHGSKYHRRPGSLGAKG) is disordered.

It belongs to the universal ribosomal protein uL3 family. Part of the 50S ribosomal subunit. Forms a cluster with proteins L14 and L19.

Functionally, one of the primary rRNA binding proteins, it binds directly near the 3'-end of the 23S rRNA, where it nucleates assembly of the 50S subunit. The chain is Large ribosomal subunit protein uL3 from Pelotomaculum thermopropionicum (strain DSM 13744 / JCM 10971 / SI).